The chain runs to 446 residues: Golgi reassembly-stacking protein 1 (446 aa).

The disordered stretch occupies residues 1-20 (MGLGASSEQPAGGEGFHLHG). The N-myristoyl glycine moiety is linked to residue G2. 2 PDZ GRASP-type domains span residues 14-104 (EGFH…FCSF) and 110-198 (HVWH…YGYL). Positions 14–214 (EGFHLHGVQE…PSSQHKKPPG (201 aa)) are GRASP. Zn(2+) is bound by residues H17, H19, and C102. The interval 189-201 (LGCGIGYGYLHRI) is essential for interaction with GOLGA2/GM130. Disordered stretches follow at residues 202–252 (PTQP…LGSR) and 343–446 (VSGP…EPGL). Phosphothreonine occurs at positions 216, 220, and 224. A compositionally biased stretch (low complexity) spans 343–354 (VSGPEDIGSSSS). 3 positions are modified to phosphoserine: S365, S367, and S376.

This sequence belongs to the GORASP family. Homodimer. Forms higher-order oligomers under interphase but not mitotic conditions. Dimers of the protein on one membrane might be able to interact with dimers on another and so stack cisternae. Interacts with the C-terminus of GOLGA2/GM130 under both mitotic and non-mitotic conditions. The interaction is critical for the correct targeting of both proteins to the cis-Golgi. Interacts with TMED2 and TMED3. Phosphorylated by CDC2/B1 and PLK kinases during mitosis. Phosphorylation cycle correlates with the cisternal stacking cycle. Phosphorylation of the homodimer prevents the association of dimers into higher-order oligomers, leading to cisternal unstacking. In terms of processing, target for caspase-3 cleavage during apoptosis. The cleavage contributes to Golgi fragmentation and occurs very early in the execution phase of apoptosis. Post-translationally, myristoylated.

It localises to the golgi apparatus. It is found in the cis-Golgi network membrane. In terms of biological role, key structural protein of the Golgi apparatus. The membrane cisternae of the Golgi apparatus adhere to each other to form stacks, which are aligned side by side to form the Golgi ribbon. Acting in concert with GORASP2/GRASP55, is required for the formation and maintenance of the Golgi ribbon, and may be dispensable for the formation of stacks. However, other studies suggest that GORASP1 plays an important role in assembly and membrane stacking of the cisternae, and in the reassembly of Golgi stacks after breakdown during mitosis. Caspase-mediated cleavage of GORASP1 is required for fragmentation of the Golgi during apoptosis. Also mediates, via its interaction with GOLGA2/GM130, the docking of transport vesicles with the Golgi membranes. Mediates ER stress-induced unconventional (ER/Golgi-independent) trafficking of core-glycosylated CFTR to cell membrane. In Mus musculus (Mouse), this protein is Golgi reassembly-stacking protein 1 (Gorasp1).